Consider the following 79-residue polypeptide: MARIGVENSLTDVQQALQQQGHEVVSLNSENDAHGCDCCVVTGQDSNMMGIADTSIKGSVIKAHGLTTDEICQQVENRT.

Belongs to the UPF0180 family.

In Bacillus mycoides (strain KBAB4) (Bacillus weihenstephanensis), this protein is UPF0180 protein BcerKBAB4_1316.